Here is a 452-residue protein sequence, read N- to C-terminus: Bifunctional protein GlmU (452 aa).

A pyrophosphorylase region spans residues 1 to 226 (MNFSAVILAA…PIEVEGVNDR (226 aa)). Residues 8 to 11 (LAAG), K22, Q73, 78 to 79 (GT), 100 to 102 (YGD), G137, E151, N166, and N224 each bind UDP-N-acetyl-alpha-D-glucosamine. A Mg(2+)-binding site is contributed by D102. A Mg(2+)-binding site is contributed by N224. The tract at residues 227-247 (AQLARLERAYQAAQAQKLLEQ) is linker. The interval 248 to 452 (GVMLRDPSRF…IANWQRPTKK (205 aa)) is N-acetyltransferase. 2 residues coordinate UDP-N-acetyl-alpha-D-glucosamine: R330 and K348. H360 (proton acceptor) is an active-site residue. Residues Y363 and N374 each contribute to the UDP-N-acetyl-alpha-D-glucosamine site. Acetyl-CoA-binding positions include A377, 383-384 (NY), S402, A420, and R437.

In the N-terminal section; belongs to the N-acetylglucosamine-1-phosphate uridyltransferase family. It in the C-terminal section; belongs to the transferase hexapeptide repeat family. Homotrimer. Mg(2+) serves as cofactor.

It localises to the cytoplasm. It catalyses the reaction alpha-D-glucosamine 1-phosphate + acetyl-CoA = N-acetyl-alpha-D-glucosamine 1-phosphate + CoA + H(+). It carries out the reaction N-acetyl-alpha-D-glucosamine 1-phosphate + UTP + H(+) = UDP-N-acetyl-alpha-D-glucosamine + diphosphate. The protein operates within nucleotide-sugar biosynthesis; UDP-N-acetyl-alpha-D-glucosamine biosynthesis; N-acetyl-alpha-D-glucosamine 1-phosphate from alpha-D-glucosamine 6-phosphate (route II): step 2/2. It functions in the pathway nucleotide-sugar biosynthesis; UDP-N-acetyl-alpha-D-glucosamine biosynthesis; UDP-N-acetyl-alpha-D-glucosamine from N-acetyl-alpha-D-glucosamine 1-phosphate: step 1/1. It participates in bacterial outer membrane biogenesis; LPS lipid A biosynthesis. In terms of biological role, catalyzes the last two sequential reactions in the de novo biosynthetic pathway for UDP-N-acetylglucosamine (UDP-GlcNAc). The C-terminal domain catalyzes the transfer of acetyl group from acetyl coenzyme A to glucosamine-1-phosphate (GlcN-1-P) to produce N-acetylglucosamine-1-phosphate (GlcNAc-1-P), which is converted into UDP-GlcNAc by the transfer of uridine 5-monophosphate (from uridine 5-triphosphate), a reaction catalyzed by the N-terminal domain. The protein is Bifunctional protein GlmU of Aliivibrio fischeri (strain ATCC 700601 / ES114) (Vibrio fischeri).